A 501-amino-acid chain; its full sequence is Glutamyl-tRNA(Gln) amidotransferase subunit A (501 aa).

Active-site charge relay system residues include Lys-80 and Ser-155. Ser-179 (acyl-ester intermediate) is an active-site residue.

Belongs to the amidase family. GatA subfamily. As to quaternary structure, heterotrimer of A, B and C subunits.

It catalyses the reaction L-glutamyl-tRNA(Gln) + L-glutamine + ATP + H2O = L-glutaminyl-tRNA(Gln) + L-glutamate + ADP + phosphate + H(+). Functionally, allows the formation of correctly charged Gln-tRNA(Gln) through the transamidation of misacylated Glu-tRNA(Gln) in organisms which lack glutaminyl-tRNA synthetase. The reaction takes place in the presence of glutamine and ATP through an activated gamma-phospho-Glu-tRNA(Gln). The chain is Glutamyl-tRNA(Gln) amidotransferase subunit A from Cutibacterium acnes (strain DSM 16379 / KPA171202) (Propionibacterium acnes).